We begin with the raw amino-acid sequence, 255 residues long: Tumor necrosis factor receptor superfamily member 9 (255 aa).

An N-terminal signal peptide occupies residues M1–S23. TNFR-Cys repeat units follow at residues L24 to C45, P47 to C86, D87 to K118, and D119 to G159. The Extracellular segment spans residues L24–Q186. 9 cysteine pairs are disulfide-bonded: C28–C37, C31–C45, C48–C62, C65–C78, C68–C86, C88–C94, C99–C106, C102–C117, and C121–C133. N-linked (GlcNAc...) asparagine glycans are attached at residues N138 and N149. A disulfide bridge connects residues C139 and C158. The disordered stretch occupies residues S161 to E180. A helical transmembrane segment spans residues I187–V213. At K214–L255 the chain is on the cytoplasmic side. The interval K214–L255 is interaction with LRR-1.

As to quaternary structure, predominantly homodimeric, but may also exist as a monomer. Interacts with TRAF1, TRAF2 and TRAF3. Interacts with LRR-repeat protein 1/LRR-1. As to expression, expressed on the surface of activated T-cells.

The protein localises to the cell membrane. Receptor for TNFSF9/4-1BBL. Conveys a signal that enhances CD8(+) T-cell survival, cytotoxicity, and mitochondrial activity, thereby promoting immunity against viruses and tumors. The chain is Tumor necrosis factor receptor superfamily member 9 (TNFRSF9) from Homo sapiens (Human).